An 80-amino-acid polypeptide reads, in one-letter code: Nuclear protein 1 (80 aa).

Positions 40–80 (GGRKGRTKREAAANTNRPSPGGHERKLLTKFQNSERKKAWR) are disordered. The segment covering 61–80 (GHERKLLTKFQNSERKKAWR) has biased composition (basic and acidic residues). A Nuclear localization signal motif is present at residues 64–80 (RKLLTKFQNSERKKAWR).

It belongs to the NUPR family. In terms of assembly, monomer. Directly interacts with MSL1 and binds MORF4L1, two components of histone acetyltransferase complex; the interaction with MORF4L1 may be mediated by MSL1. Interacts with EP300; this interaction enhances the effect of EP300 on PAX2 transcription factor activity. Interacts with PAXIP1; this interaction prevents PAXIP1 inhibition of PAX2 transcription factor activity. Interacts with COPS5; this interaction allows COPS5-dependent CDKN1B nuclear to cytoplasm translocation. Interacts with RNF2. Interacts with FOXO3; this interaction represses FOXO3 transactivation. Interacts with PTMA; regulates apoptotic process. Interacts with MYOD1, EP300 and DDX5; this interaction coordinates the association of anti-proliferative and pro-myogenic proteins at the myogenin promoter. Interacts with TP53; interaction is stress-dependent. Forms a complex with EP300 and TP53; this complex binds CDKN1A promoter leading to transcriptional induction of CDKN1A. Phosphorylated. Phosphorylation promotes DNA-binding activity. In terms of processing, acetylated. In terms of tissue distribution, strongly activated in pancreatic acinar cells during the acute phase of pancreatitis, in developing pancreas and during pancreatic regeneration.

It is found in the nucleus. Its subcellular location is the cytoplasm. The protein resides in the perinuclear region. Its function is as follows. Transcription regulator that converts stress signals into a program of gene expression that empowers cells with resistance to the stress induced by a change in their microenvironment. Thereby participates in the regulation of many processes namely cell-cycle, apoptosis, autophagy and DNA repair responses. Controls cell cycle progression and protects cells from genotoxic stress induced by doxorubicin through the complex formation with TP53 and EP300 that binds CDKN1A promoter leading to transcriptional induction of CDKN1A. Protects pancreatic cancer cells from stress-induced cell death by binding the RELB promoter and activating its transcription, leading to IER3 transactivation. Negatively regulates apoptosis through interaction with PTMA. Inhibits autophagy-induced apoptosis in cardiac cells through FOXO3 interaction, inducing cytoplasmic translocation of FOXO3 thereby preventing the FOXO3 association with the pro-autophagic BNIP3 promoter. Inhibits cell growth and facilitates programmed cell death by apoptosis after adriamycin-induced DNA damage through transactivation of TP53. Regulates methamphetamine-induced apoptosis and autophagy through DDIT3-mediated endoplasmic reticulum stress pathway. Participates in DNA repair following gamma-irradiation by facilitating DNA access of the transcription machinery through interaction with MSL1 leading to inhibition of histone H4' Lys-16' acetylation (H4K16ac). Coactivator of PAX2 transcription factor activity, both by recruiting the EP300 cofactor to increase PAX2 transcription factor activity and by binding PAXIP1 to suppress PAXIP1-induced inhibition on PAX2. Positively regulates cell cycle progression through interaction with COPS5 inducing cytoplasmic translocation of CDKN1B leading to the CDKN1B degradation. Coordinates, through its interaction with EP300, the assiociation of MYOD1, EP300 and DDX5 to the MYOG promoter, leading to inhibition of cell-cycle progression and myogenic differentiation promotion. Negatively regulates beta cell proliferation via inhibition of cell-cycle regulatory genes expression through the suppression of their promoter activities. Also required for LHB expression and ovarian maturation. Exacerbates CNS inflammation and demyelination upon cuprizone treatment. This Rattus norvegicus (Rat) protein is Nuclear protein 1.